The sequence spans 260 residues: MLAKRIIPCLDVDNGRVVKGVQFVDIKDAGDPVEVAKRYNEQGADEITFLDITATNDERDTTYHTVERMAETVFVPLTVGGGVRKIADIRNLLNAGADKVAINSAAVFTPEFVGEASQKFGNQCIVVAIDAKRVADIEVDGIIMPRWEIFTHGGRKPTGIDAVAWASKMAELGAGELLVTSMDGDGTKKGYDLALMKQITSRVNVPVIASGGVGNLQHLAEGVLEGGVDAVLAASIFHFGEYTVQEAKAYMAAQGIQMRL.

Catalysis depends on residues Asp-11 and Asp-130.

This sequence belongs to the HisA/HisF family. As to quaternary structure, heterodimer of HisH and HisF.

It is found in the cytoplasm. The enzyme catalyses 5-[(5-phospho-1-deoxy-D-ribulos-1-ylimino)methylamino]-1-(5-phospho-beta-D-ribosyl)imidazole-4-carboxamide + L-glutamine = D-erythro-1-(imidazol-4-yl)glycerol 3-phosphate + 5-amino-1-(5-phospho-beta-D-ribosyl)imidazole-4-carboxamide + L-glutamate + H(+). Its pathway is amino-acid biosynthesis; L-histidine biosynthesis; L-histidine from 5-phospho-alpha-D-ribose 1-diphosphate: step 5/9. IGPS catalyzes the conversion of PRFAR and glutamine to IGP, AICAR and glutamate. The HisF subunit catalyzes the cyclization activity that produces IGP and AICAR from PRFAR using the ammonia provided by the HisH subunit. In Psychrobacter cryohalolentis (strain ATCC BAA-1226 / DSM 17306 / VKM B-2378 / K5), this protein is Imidazole glycerol phosphate synthase subunit HisF.